The sequence spans 257 residues: V-type proton ATPase subunit D (257 aa).

Positions 215–257 are disordered; it reads KEQEAAQKALEGPGPGEDAAHSENNPPRNLLASEEDNLPVLFN.

It belongs to the V-ATPase D subunit family. In terms of assembly, V-ATPase is a heteromultimeric enzyme made up of two complexes: the ATP-hydrolytic V1 complex and the proton translocation V0 complex. The V1 complex consists of three catalytic AB heterodimers that form a heterohexamer, three peripheral stalks each consisting of EG heterodimers, one central rotor including subunits D and F, and the regulatory subunits C and H. The proton translocation complex V0 consists of the proton transport subunit a, a ring of proteolipid subunits c9c'', rotary subunit d, subunits e and f, and the accessory subunits vah-19/Ac45 and vah-20/PRR.

In terms of biological role, subunit of the V1 complex of vacuolar(H+)-ATPase (V-ATPase), a multisubunit enzyme composed of a peripheral complex (V1) that hydrolyzes ATP and a membrane integral complex (V0) that translocates protons. V-ATPase is responsible for acidifying and maintaining the pH of intracellular compartments and in some cell types, is targeted to the plasma membrane, where it is responsible for acidifying the extracellular environment. In Caenorhabditis elegans, this protein is V-type proton ATPase subunit D.